The following is a 385-amino-acid chain: FAD-dependent monooxygenase verC2 (385 aa).

Residues Arg27, Asp227, and Ala240 each contribute to the FAD site. An N-linked (GlcNAc...) asparagine glycan is attached at Asn320. A helical transmembrane segment spans residues 365–385; that stretch reads WKTTIMFIALLTIVVLIYSFI.

This sequence belongs to the paxM FAD-dependent monooxygenase family. The cofactor is FAD.

It localises to the membrane. Its pathway is secondary metabolite biosynthesis; terpenoid biosynthesis. The protein operates within mycotoxin biosynthesis. In terms of biological role, FAD-dependent monooxygenase; part of the gene cluster that mediates the biosynthesis of the neurotoxin verrucosidin, a methylated alpha-pyrone polyketide that inhibits oxidative phosphorylation in mitochondria and thereby causes neurological diseases. The carbon backbone of verrucosidin is synthesized by the HR-PKS verA, and further modified by the other verrucodidin cluster enzymes. The protein is FAD-dependent monooxygenase verC2 of Penicillium polonicum.